The primary structure comprises 322 residues: Beta-ketoacyl-[acyl-carrier-protein] synthase III (322 aa).

Residues Cys112 and His249 contribute to the active site. The tract at residues 250–254 is ACP-binding; the sequence is QANQR. Asn279 is an active-site residue.

Belongs to the thiolase-like superfamily. FabH family. In terms of assembly, homodimer.

The protein resides in the cytoplasm. It catalyses the reaction malonyl-[ACP] + acetyl-CoA + H(+) = 3-oxobutanoyl-[ACP] + CO2 + CoA. The protein operates within lipid metabolism; fatty acid biosynthesis. In terms of biological role, catalyzes the condensation reaction of fatty acid synthesis by the addition to an acyl acceptor of two carbons from malonyl-ACP. Catalyzes the first condensation reaction which initiates fatty acid synthesis and may therefore play a role in governing the total rate of fatty acid production. Possesses both acetoacetyl-ACP synthase and acetyl transacylase activities. Its substrate specificity determines the biosynthesis of branched-chain and/or straight-chain of fatty acids. In Caulobacter vibrioides (strain ATCC 19089 / CIP 103742 / CB 15) (Caulobacter crescentus), this protein is Beta-ketoacyl-[acyl-carrier-protein] synthase III.